The chain runs to 284 residues: MDNKIIKKVGVILRPSSPQLKSGYEKLEKIFSSYSIEVLIEDKSAKMIGASGASFKKICNECDFLVSFGGDGTLISTVRKSFDYDIPILGIHAGNLGFLADLSLDELDSFVEKITQNRYKIDERAVLEATVIKNEKEIKMYAFNDVVLTRTRVSNMIHIETLVNSRSFNTYYGDGVVVSTPTGSTAYNLSAGGPVLFPMSNVFALTPICPHSLTQRPVVLPGKFTIEMKTSEERALIIIDGQDVHELELGESVHIKLATKTVKLMHKEEYNYFDVLKEKLRWGE.

Asp71 acts as the Proton acceptor in catalysis. NAD(+) is bound by residues 71-72 (DG), 144-145 (ND), Asp174, 185-190 (TAYNLS), and Gln242.

This sequence belongs to the NAD kinase family. A divalent metal cation serves as cofactor.

It is found in the cytoplasm. It carries out the reaction NAD(+) + ATP = ADP + NADP(+) + H(+). In terms of biological role, involved in the regulation of the intracellular balance of NAD and NADP, and is a key enzyme in the biosynthesis of NADP. Catalyzes specifically the phosphorylation on 2'-hydroxyl of the adenosine moiety of NAD to yield NADP. The chain is NAD kinase from Sulfurimonas denitrificans (strain ATCC 33889 / DSM 1251) (Thiomicrospira denitrificans (strain ATCC 33889 / DSM 1251)).